An 843-amino-acid polypeptide reads, in one-letter code: Protein translocase subunit SecA (843 aa).

Residues Q85, 103–107, and D490 contribute to the ATP site; that span reads GEGKT. A disordered region spans residues 799–834; that stretch reads KNAVENRSDDSLPKQPVKAEPRVGRNDPCPCGSGKK. Basic and acidic residues predominate over residues 802–823; sequence VENRSDDSLPKQPVKAEPRVGR. 4 residues coordinate Zn(2+): C827, C829, C838, and C839.

Belongs to the SecA family. As to quaternary structure, monomer and homodimer. Part of the essential Sec protein translocation apparatus which comprises SecA, SecYEG and auxiliary proteins SecDF. Other proteins may also be involved. Zn(2+) serves as cofactor.

Its subcellular location is the cell membrane. It localises to the cytoplasm. The enzyme catalyses ATP + H2O + cellular proteinSide 1 = ADP + phosphate + cellular proteinSide 2.. Part of the Sec protein translocase complex. Interacts with the SecYEG preprotein conducting channel. Has a central role in coupling the hydrolysis of ATP to the transfer of proteins into and across the cell membrane, serving as an ATP-driven molecular motor driving the stepwise translocation of polypeptide chains across the membrane. This chain is Protein translocase subunit SecA, found in Heliobacterium modesticaldum (strain ATCC 51547 / Ice1).